The primary structure comprises 96 residues: RNA-binding protein Hfq (96 aa).

Residues 9-68 (DPYLNALRRERIPVSIYLVNGIKLQGQIESFDQFVILLKNTVNQMVYKHAISTVVPARSV) form the Sm domain.

The protein belongs to the Hfq family. In terms of assembly, homohexamer.

Functionally, RNA chaperone that binds small regulatory RNA (sRNAs) and mRNAs to facilitate mRNA translational regulation in response to envelope stress, environmental stress and changes in metabolite concentrations. Also binds with high specificity to tRNAs. The polypeptide is RNA-binding protein Hfq (Histophilus somni (strain 129Pt) (Haemophilus somnus)).